The chain runs to 272 residues: L-aspartate dehydrogenase 3 (272 aa).

NAD(+) is bound by residues alanine 126 and asparagine 194. Histidine 224 is a catalytic residue.

This sequence belongs to the L-aspartate dehydrogenase family.

It carries out the reaction L-aspartate + NADP(+) + H2O = oxaloacetate + NH4(+) + NADPH + H(+). The catalysed reaction is L-aspartate + NAD(+) + H2O = oxaloacetate + NH4(+) + NADH + H(+). It functions in the pathway cofactor biosynthesis; NAD(+) biosynthesis; iminoaspartate from L-aspartate (dehydrogenase route): step 1/1. Specifically catalyzes the NAD or NADP-dependent dehydrogenation of L-aspartate to iminoaspartate. This is L-aspartate dehydrogenase 3 from Bordetella bronchiseptica (strain ATCC BAA-588 / NCTC 13252 / RB50) (Alcaligenes bronchisepticus).